A 2515-amino-acid chain; its full sequence is Probable maltase-glucoamylase 2 (2515 aa).

Residues 1 to 9 (MARKLSVLE) lie on the Cytoplasmic side of the membrane. Residues 10–30 (VLLIIFCLIVVTIDILLLLLV) form a helical membrane-spanning segment. At 31–482 (LEETSDTSFT…DGVWIEMNEV (452 aa)) the chain is on the lumenal side. A P-type 1 domain is found at 41–88 (PECPEIPQSERIDCTPDQEVTEDICRWQYKCCWSPVADANVPRCFFPW). Intrachain disulfides connect C43–C72, C54–C71, and C65–C84. Residues 152–865 (SHENINLVDG…MDKQPANFIV (714 aa)) are maltase. N-linked (GlcNAc...) asparagine glycosylation occurs at N167. Y371 carries the post-translational modification Sulfotyrosine. An N-linked (GlcNAc...) asparagine glycan is attached at N421. The active-site Nucleophile is E478. Residue E481 is part of the active site. 3 cysteine pairs are disulfide-bonded: C608–C619, C916–C933, and C928–C946. An N-linked (GlcNAc...) asparagine glycan is attached at N613. One can recognise a P-type 2 domain in the interval 904–950 (WNLPVSDLEKFNCYPDDPTASEESCRQRGCLWEDTSTPGVPTCYYDT). The tract at residues 1023-1766 (PLNTPPQPVG…GVNTYVTQVS (744 aa)) is glucoamylase. Y1238 is modified (sulfotyrosine). D1375 serves as the catalytic Nucleophile. E1378 is an active-site residue. Disordered regions lie at residues 1816–1901 (TPTK…PITT), 1994–2015 (STTV…STNA), and 2037–2091 (TVPD…SSTT). The segment covering 1817–1831 (PTKTSTIPMSSHPSP) has biased composition (polar residues). The span at 1832 to 1901 (STTNATSSET…STNATVPITT (70 aa)) shows a compositional bias: low complexity. N-linked (GlcNAc...) asparagine glycosylation is present at N2249.

Belongs to the glycosyl hydrolase 31 family.

The protein resides in the membrane. The enzyme catalyses Hydrolysis of terminal (1-&gt;4)-linked alpha-D-glucose residues successively from non-reducing ends of the chains with release of beta-D-glucose.. The sequence is that of Probable maltase-glucoamylase 2 from Homo sapiens (Human).